The chain runs to 289 residues: Glucanase inhibitor protein 2 (289 aa).

An N-terminal signal peptide occupies residues 1–19 (MKVTATIAAASMAIAAASA). A Peptidase S1 domain is found at 29–257 (ILGGSIIPSG…ALKWVNPIIK (229 aa)). A disulfide bridge connects residues cysteine 56 and cysteine 72. N-linked (GlcNAc...) asparagine glycans are attached at residues asparagine 89, asparagine 104, and asparagine 109. 2 disulfides stabilise this stretch: cysteine 180–cysteine 192 and cysteine 202–cysteine 233.

It belongs to the peptidase S1 family.

The protein localises to the secreted. Secreted effector that suppresses host plant glucan elicitor-mediated defense responses. Targets host endoglucanases and inhibits the endoglucanase-mediated release of elicitor-active glucan oligosaccharides from P.sojae cell walls. This is Glucanase inhibitor protein 2 from Phytophthora sojae (Soybean stem and root rot agent).